A 411-amino-acid polypeptide reads, in one-letter code: Putative competence-damage inducible protein (411 aa).

It belongs to the CinA family.

In Clostridium acetobutylicum (strain ATCC 824 / DSM 792 / JCM 1419 / IAM 19013 / LMG 5710 / NBRC 13948 / NRRL B-527 / VKM B-1787 / 2291 / W), this protein is Putative competence-damage inducible protein.